The following is a 150-amino-acid chain: Large ribosomal subunit protein uL22c (150 aa).

It belongs to the universal ribosomal protein uL22 family. Part of the 50S ribosomal subunit.

The protein resides in the plastid. Its subcellular location is the chloroplast. Its function is as follows. This protein binds specifically to 23S rRNA. In terms of biological role, the globular domain of the protein is located near the polypeptide exit tunnel on the outside of the subunit, while an extended beta-hairpin is found that lines the wall of the exit tunnel in the center of the 70S ribosome. The chain is Large ribosomal subunit protein uL22c (rpl22) from Fagopyrum esculentum subsp. ancestrale (Wild buckwheat).